A 427-amino-acid polypeptide reads, in one-letter code: 3-isopropylmalate dehydratase large subunit (427 aa).

[4Fe-4S] cluster-binding residues include C308, C368, and C371.

It belongs to the aconitase/IPM isomerase family. LeuC type 2 subfamily. Heterodimer of LeuC and LeuD. It depends on [4Fe-4S] cluster as a cofactor.

The catalysed reaction is (2R,3S)-3-isopropylmalate = (2S)-2-isopropylmalate. It functions in the pathway amino-acid biosynthesis; L-leucine biosynthesis; L-leucine from 3-methyl-2-oxobutanoate: step 2/4. Functionally, catalyzes the isomerization between 2-isopropylmalate and 3-isopropylmalate, via the formation of 2-isopropylmaleate. The protein is 3-isopropylmalate dehydratase large subunit of Geobacter sulfurreducens (strain ATCC 51573 / DSM 12127 / PCA).